A 411-amino-acid polypeptide reads, in one-letter code: Envelope glycoprotein G (411 aa).

Positions 1–19 are cleaved as a signal peptide; that stretch reads MLTVLAALSLLSLLTSATG. Asparagine 83, asparagine 138, asparagine 222, asparagine 245, and asparagine 317 each carry an N-linked (GlcNAc...) asparagine; by host glycan. Composition is skewed to polar residues over residues 306-327 and 334-345; these read VPSS…SNSP and SVNSDDSTHTGG. The interval 306–345 is disordered; that stretch reads VPSSAAESSLENQSTQEESNSPEVAHLRSVNSDDSTHTGG. Residues 364–384 traverse the membrane as a helical segment; the sequence is LALIGLGTCAMIGLIVYICVL.

Belongs to the alphaherpesvirinae glycoprotein G family.

It is found in the virion membrane. Its function is as follows. Chemokine-binding protein that inhibits neutrophils' chemotaxis. The protein is Envelope glycoprotein G (gG) of Equine herpesvirus 1 (strain Kentucky A) (EHV-1).